The primary structure comprises 228 residues: L-ribulose-5-phosphate 4-epimerase UlaF (228 aa).

Residues 26–27, 43–44, and 72–73 each bind substrate; these read GN, SG, and SS. Zn(2+) is bound by residues Asp-74, His-93, and His-95. Catalysis depends on Asp-118, which acts as the Proton donor/acceptor. His-167 contacts Zn(2+). The active-site Proton donor/acceptor is the Tyr-225.

Belongs to the aldolase class II family. AraD/FucA subfamily. The cofactor is Zn(2+).

It catalyses the reaction L-ribulose 5-phosphate = D-xylulose 5-phosphate. Its pathway is cofactor degradation; L-ascorbate degradation; D-xylulose 5-phosphate from L-ascorbate: step 4/4. Catalyzes the isomerization of L-ribulose 5-phosphate to D-xylulose 5-phosphate. Is involved in the anaerobic L-ascorbate utilization. This chain is L-ribulose-5-phosphate 4-epimerase UlaF, found in Escherichia coli O139:H28 (strain E24377A / ETEC).